Reading from the N-terminus, the 314-residue chain is DegV domain-containing protein XAC3508 (314 aa).

The region spanning Ile3 to Ala307 is the DegV domain. Hexadecanoate-binding residues include Thr63 and Ser96.

Functionally, may bind long-chain fatty acids, such as palmitate, and may play a role in lipid transport or fatty acid metabolism. This is DegV domain-containing protein XAC3508 from Xanthomonas axonopodis pv. citri (strain 306).